Consider the following 298-residue polypeptide: Putative ankyrin repeat-containing protein TP_0502 (298 aa).

ANK repeat units lie at residues cysteine 143–leucine 172, arginine 176–glutamine 205, arginine 210–valine 239, and asparagine 243–leucine 272.

The sequence is that of Putative ankyrin repeat-containing protein TP_0502 from Treponema pallidum (strain Nichols).